The primary structure comprises 76 residues: MIYKVFYQETKERNPRREQTKTLYVTIDAANELEGRIAARKLVEENTAYNIEFIELLSDKHLEYEKETGVFELTEF.

Belongs to the RNA polymerase subunit epsilon family. In terms of assembly, RNAP is composed of a core of 2 alpha, a beta and a beta' subunit. The core is associated with a delta subunit, and at least one of epsilon or omega. When a sigma factor is associated with the core the holoenzyme is formed, which can initiate transcription.

The catalysed reaction is RNA(n) + a ribonucleoside 5'-triphosphate = RNA(n+1) + diphosphate. Its function is as follows. A non-essential component of RNA polymerase (RNAP). This Streptococcus agalactiae serotype Ia (strain ATCC 27591 / A909 / CDC SS700) protein is DNA-directed RNA polymerase subunit epsilon.